The following is a 210-amino-acid chain: Putative protein-lysine deacylase ABHD14B (210 aa).

A Phosphoserine modification is found at Ser91. Active-site charge relay system residues include Ser111, Asp162, and His188.

The protein belongs to the AB hydrolase superfamily. ABHD14 family. In terms of assembly, may interact with TAF1.

The protein resides in the cytoplasm. It localises to the nucleus. The enzyme catalyses L-lysyl-[protein] + acetyl-CoA = N(6)-acetyl-L-lysyl-[protein] + CoA + H(+). Functionally, acts as an atypical protein-lysine deacetylase in vitro. Catalyzes the deacetylation of lysine residues using CoA as substrate, generating acetyl-CoA and the free amine of protein-lysine residues. Additional experiments are however required to confirm the protein-lysine deacetylase activity in vivo. Has hydrolase activity towards various surrogate p-nitrophenyl (pNp) substrates, such as pNp-butyrate, pNp-acetate and pNp-octanoate in vitro, with a strong preference for pNp-acetate. May activate transcription. This Rattus norvegicus (Rat) protein is Putative protein-lysine deacylase ABHD14B.